A 203-amino-acid chain; its full sequence is Imidazoleglycerol-phosphate dehydratase (203 aa).

It belongs to the imidazoleglycerol-phosphate dehydratase family.

The protein localises to the cytoplasm. The enzyme catalyses D-erythro-1-(imidazol-4-yl)glycerol 3-phosphate = 3-(imidazol-4-yl)-2-oxopropyl phosphate + H2O. Its pathway is amino-acid biosynthesis; L-histidine biosynthesis; L-histidine from 5-phospho-alpha-D-ribose 1-diphosphate: step 6/9. This chain is Imidazoleglycerol-phosphate dehydratase, found in Synechococcus sp. (strain RCC307).